Here is a 292-residue protein sequence, read N- to C-terminus: 4-hydroxy-tetrahydrodipicolinate synthase (292 aa).

Residue Thr-45 coordinates pyruvate. The active-site Proton donor/acceptor is Tyr-133. Lys-161 acts as the Schiff-base intermediate with substrate in catalysis. Ile-203 is a pyruvate binding site.

Belongs to the DapA family. As to quaternary structure, homotetramer; dimer of dimers.

It is found in the cytoplasm. It carries out the reaction L-aspartate 4-semialdehyde + pyruvate = (2S,4S)-4-hydroxy-2,3,4,5-tetrahydrodipicolinate + H2O + H(+). It functions in the pathway amino-acid biosynthesis; L-lysine biosynthesis via DAP pathway; (S)-tetrahydrodipicolinate from L-aspartate: step 3/4. Its function is as follows. Catalyzes the condensation of (S)-aspartate-beta-semialdehyde [(S)-ASA] and pyruvate to 4-hydroxy-tetrahydrodipicolinate (HTPA). The sequence is that of 4-hydroxy-tetrahydrodipicolinate synthase from Salmonella typhi.